The chain runs to 652 residues: Phosphomethylpyrimidine synthase (652 aa).

Residues N235, M264, Y293, H329, 349–351 (SRG), 390–393 (DGMR), and E429 each bind substrate. H433 contacts Zn(2+). Y456 lines the substrate pocket. H497 contributes to the Zn(2+) binding site. The [4Fe-4S] cluster site is built by C577, C580, and C585.

Belongs to the ThiC family. In terms of assembly, homodimer. The cofactor is [4Fe-4S] cluster.

The catalysed reaction is 5-amino-1-(5-phospho-beta-D-ribosyl)imidazole + S-adenosyl-L-methionine = 4-amino-2-methyl-5-(phosphooxymethyl)pyrimidine + CO + 5'-deoxyadenosine + formate + L-methionine + 3 H(+). The protein operates within cofactor biosynthesis; thiamine diphosphate biosynthesis. Functionally, catalyzes the synthesis of the hydroxymethylpyrimidine phosphate (HMP-P) moiety of thiamine from aminoimidazole ribotide (AIR) in a radical S-adenosyl-L-methionine (SAM)-dependent reaction. The polypeptide is Phosphomethylpyrimidine synthase (Shewanella woodyi (strain ATCC 51908 / MS32)).